A 365-amino-acid chain; its full sequence is Cobalt-precorrin-5B C(1)-methyltransferase (365 aa).

This sequence belongs to the CbiD family.

It catalyses the reaction Co-precorrin-5B + S-adenosyl-L-methionine = Co-precorrin-6A + S-adenosyl-L-homocysteine. Its pathway is cofactor biosynthesis; adenosylcobalamin biosynthesis; cob(II)yrinate a,c-diamide from sirohydrochlorin (anaerobic route): step 6/10. Its function is as follows. Catalyzes the methylation of C-1 in cobalt-precorrin-5B to form cobalt-precorrin-6A. The sequence is that of Cobalt-precorrin-5B C(1)-methyltransferase from Geobacillus sp. (strain WCH70).